Reading from the N-terminus, the 674-residue chain is Pentatricopeptide repeat-containing protein At4g17616 (674 aa).

PPR repeat units follow at residues Gly-409–Met-443, Glu-444–Thr-478, Met-519–Pro-553, Thr-554–Asn-584, and Thr-593–Asn-627.

Belongs to the PPR family. P subfamily.

The sequence is that of Pentatricopeptide repeat-containing protein At4g17616 from Arabidopsis thaliana (Mouse-ear cress).